A 104-amino-acid polypeptide reads, in one-letter code: Late embryogenis abundant protein 41 (104 aa).

A mitochondrion-targeting transit peptide spans 1 to 31 (MAARSLSGAVKSLCSAASGSLSCSIVLRRSY).

Belongs to the LEA type 3 family.

The protein localises to the mitochondrion. The sequence is that of Late embryogenis abundant protein 41 from Arabidopsis thaliana (Mouse-ear cress).